The following is a 395-amino-acid chain: Type II restriction enzyme BsuFI (395 aa).

As to quaternary structure, homodimer. Mg(2+) serves as cofactor.

It carries out the reaction Endonucleolytic cleavage of DNA to give specific double-stranded fragments with terminal 5'-phosphates.. Its function is as follows. A P subtype restriction enzyme that recognizes the double-stranded sequence 5'-CCGG-3' and cleaves after C-1. The protein is Type II restriction enzyme BsuFI (hsdFR) of Bacillus subtilis.